Here is an 86-residue protein sequence, read N- to C-terminus: MKTLLLTLVVVTMVCMDLGYTTICYNHLSRTPETTEICPDSWYFCYKISLADGNDVRIKRGCTFTCPELRPTGKYVYCCRRDKCNQ.

Positions 1 to 21 (MKTLLLTLVVVTMVCMDLGYT) are cleaved as a signal peptide. 4 disulfides stabilise this stretch: C24/C45, C38/C62, C66/C78, and C79/C84.

Belongs to the three-finger toxin family. Short-chain subfamily. Orphan group VIII (haditoxin) sub-subfamily. Homodimer; non-covalently linked. In terms of tissue distribution, expressed by the venom gland.

The protein resides in the secreted. Antagonist of muscle and neuronal nicotinic acetylcholine receptors (nAChR) with highest affinity for neuronal alpha-7/CHRNA7 nAChRs. This chain is Neurotoxin homolog NL1, found in Naja atra (Chinese cobra).